Reading from the N-terminus, the 402-residue chain is tRNA pseudouridine synthase Pus10 (402 aa).

D215 functions as the Nucleophile in the catalytic mechanism. The segment at 370–402 is disordered; sequence ERGGHPGARGGTRRRPRKGPARPAGGRDRPRKT. The segment covering 380–389 has biased composition (basic residues); that stretch reads GTRRRPRKGP.

Belongs to the pseudouridine synthase Pus10 family.

It catalyses the reaction uridine(54) in tRNA = pseudouridine(54) in tRNA. The enzyme catalyses uridine(55) in tRNA = pseudouridine(55) in tRNA. Its function is as follows. Responsible for synthesis of pseudouridine from uracil-54 and uracil-55 in the psi GC loop of transfer RNAs. This Cenarchaeum symbiosum (strain A) protein is tRNA pseudouridine synthase Pus10.